Reading from the N-terminus, the 100-residue chain is Small ribosomal subunit protein uS14 (100 aa).

This sequence belongs to the universal ribosomal protein uS14 family. Part of the 30S ribosomal subunit. Contacts proteins S3 and S10.

Its function is as follows. Binds 16S rRNA, required for the assembly of 30S particles and may also be responsible for determining the conformation of the 16S rRNA at the A site. This is Small ribosomal subunit protein uS14 from Prochlorococcus marinus subsp. pastoris (strain CCMP1986 / NIES-2087 / MED4).